The sequence spans 282 residues: Phosphatidylglycerol--prolipoprotein diacylglyceryl transferase (282 aa).

Transmembrane regions (helical) follow at residues 18–38, 56–76, and 89–109; these read IQVH…VALA, ILWA…IFQW, and IWDG…VVIL. Arg-137 serves as a coordination point for a 1,2-diacyl-sn-glycero-3-phospho-(1'-sn-glycerol). A helical membrane pass occupies residues 237–257; it reads VIRVSQALSVVLFFGSIGLMI.

Belongs to the Lgt family.

It is found in the cell membrane. The enzyme catalyses L-cysteinyl-[prolipoprotein] + a 1,2-diacyl-sn-glycero-3-phospho-(1'-sn-glycerol) = an S-1,2-diacyl-sn-glyceryl-L-cysteinyl-[prolipoprotein] + sn-glycerol 1-phosphate + H(+). The protein operates within protein modification; lipoprotein biosynthesis (diacylglyceryl transfer). In terms of biological role, catalyzes the transfer of the diacylglyceryl group from phosphatidylglycerol to the sulfhydryl group of the N-terminal cysteine of a prolipoprotein, the first step in the formation of mature lipoproteins. The chain is Phosphatidylglycerol--prolipoprotein diacylglyceryl transferase from Lactiplantibacillus plantarum (strain ATCC BAA-793 / NCIMB 8826 / WCFS1) (Lactobacillus plantarum).